The following is a 451-amino-acid chain: MVSSRRNTGGIQRDGSLRDWSEFVDPSPSPKLLYSQSYVAMRGLLSSLVSMDFALLSSRLKSAWAAILSQRHTRSPERSKSRGLSCKRLAFHLFVCFMVGIFIGFMPFFSVDVSQKIVSENGRLPFDEGAVDRGMVDGKVKELETIVVEKEVDIIDESEVEESPPVPAMLDDEADFVESAPAIPDINDLDITVRKLLIIVTITTVRPQQAYYLNRLAHVLKTVQSPLLWLVVEWPDQSFQTAEILRSSGVMYRHLICRKNTTSVRKIAVCQRNTAIYHIKKHRLDGIMHFADEERSYMSDVFEEMRKIRRFGAWPVAIHTGIKYRVVLEGPICKGNRVTGWNTIQNIQKKSAVRRFPVGFSGFAFNSTMLWDPERWNRPPMDSVIVHSGGRGGLQESRFIEKLVKHERQIEGLPEDCNRVMVWNFNLEPPLLNVPPGWSLHKNLDAVIPVT.

The Cytoplasmic segment spans residues 1–88 (MVSSRRNTGG…SKSRGLSCKR (88 aa)). Residues 89–109 (LAFHLFVCFMVGIFIGFMPFF) traverse the membrane as a helical; Signal-anchor for type II membrane protein segment. The Lumenal segment spans residues 110–451 (SVDVSQKIVS…KNLDAVIPVT (342 aa)). 2 N-linked (GlcNAc...) asparagine glycosylation sites follow: N260 and N366.

Belongs to the glycosyltransferase 43 family.

The protein resides in the golgi apparatus membrane. Probable beta-1,4-xylosyltransferase involved in xylan biosynthesis in cell walls. This is Probable beta-1,4-xylosyltransferase GT43E from Oryza sativa subsp. japonica (Rice).